The following is a 169-amino-acid chain: MADGGLIGLYPGTFDPITNGHLDIIGRAAQLCSKLVIGVARNAGKGPLFPTAERVEMVRAEIAPIAERTGTEIDVQAFDSLLIAFAQQVSAQVIVRGLRAVSDFDYEFQMAGMNARLDQRIETIFLMASERHQFISSRFVKEIAQLGGDISSFVPKLTLERTLRRVGRP.

Thr13 serves as a coordination point for substrate. ATP contacts are provided by residues 13–14 (TF) and His21. 3 residues coordinate substrate: Lys45, Leu82, and Arg96. ATP is bound by residues 97–99 (GLR), Glu107, and 132–138 (HQFISSR).

This sequence belongs to the bacterial CoaD family. Homohexamer. Requires Mg(2+) as cofactor.

It is found in the cytoplasm. It catalyses the reaction (R)-4'-phosphopantetheine + ATP + H(+) = 3'-dephospho-CoA + diphosphate. It participates in cofactor biosynthesis; coenzyme A biosynthesis; CoA from (R)-pantothenate: step 4/5. Its function is as follows. Reversibly transfers an adenylyl group from ATP to 4'-phosphopantetheine, yielding dephospho-CoA (dPCoA) and pyrophosphate. This Acidiphilium cryptum (strain JF-5) protein is Phosphopantetheine adenylyltransferase.